The sequence spans 242 residues: Polycomb group RING finger protein 3 (242 aa).

The RING-type zinc finger occupies cysteine 17 to arginine 56. The interval alanine 115 to histidine 149 is disordered. Basic and acidic residues predominate over residues glutamine 117 to glutamate 140. The interval serine 132–leucine 242 is interaction with BCORL1.

Component of a PRC1-like complex that contains PCGF3, RNF2 and RYBP. Interacts with CBX6, CBX7 and CBX8. Interacts with BCORL1.

It localises to the nucleus. Its subcellular location is the nucleoplasm. Its function is as follows. Component of a Polycomb group (PcG) multiprotein PRC1-like complex, a complex class required to maintain the transcriptionally repressive state of many genes, including Hox genes, throughout development. PcG PRC1 complex acts via chromatin remodeling and modification of histones; it mediates monoubiquitination of histone H2A 'Lys-119', rendering chromatin heritably changed in its expressibility. Within the PRC1-like complex, regulates RNF2 ubiquitin ligase activity. Plays a redundant role with PCGF5 as part of a PRC1-like complex that mediates monoubiquitination of histone H2A 'Lys-119' on the X chromosome and is required for normal silencing of one copy of the X chromosome in XX females. This chain is Polycomb group RING finger protein 3 (PCGF3), found in Bos taurus (Bovine).